A 479-amino-acid polypeptide reads, in one-letter code: Aspartyl/glutamyl-tRNA(Asn/Gln) amidotransferase subunit B (479 aa).

It belongs to the GatB/GatE family. GatB subfamily. Heterotrimer of A, B and C subunits.

It carries out the reaction L-glutamyl-tRNA(Gln) + L-glutamine + ATP + H2O = L-glutaminyl-tRNA(Gln) + L-glutamate + ADP + phosphate + H(+). It catalyses the reaction L-aspartyl-tRNA(Asn) + L-glutamine + ATP + H2O = L-asparaginyl-tRNA(Asn) + L-glutamate + ADP + phosphate + 2 H(+). Functionally, allows the formation of correctly charged Asn-tRNA(Asn) or Gln-tRNA(Gln) through the transamidation of misacylated Asp-tRNA(Asn) or Glu-tRNA(Gln) in organisms which lack either or both of asparaginyl-tRNA or glutaminyl-tRNA synthetases. The reaction takes place in the presence of glutamine and ATP through an activated phospho-Asp-tRNA(Asn) or phospho-Glu-tRNA(Gln). In Streptococcus pyogenes serotype M5 (strain Manfredo), this protein is Aspartyl/glutamyl-tRNA(Asn/Gln) amidotransferase subunit B.